A 157-amino-acid polypeptide reads, in one-letter code: Transcription elongation factor GreA (157 aa).

The stretch at 47 to 75 forms a coiled coil; the sequence is ENAEYDAAREKQGQIEDRITELENILSNA.

Belongs to the GreA/GreB family.

Functionally, necessary for efficient RNA polymerase transcription elongation past template-encoded arresting sites. The arresting sites in DNA have the property of trapping a certain fraction of elongating RNA polymerases that pass through, resulting in locked ternary complexes. Cleavage of the nascent transcript by cleavage factors such as GreA or GreB allows the resumption of elongation from the new 3'terminus. GreA releases sequences of 2 to 3 nucleotides. In Mycoplasmopsis pulmonis (strain UAB CTIP) (Mycoplasma pulmonis), this protein is Transcription elongation factor GreA.